We begin with the raw amino-acid sequence, 388 residues long: Staphopain A (388 aa).

Positions 1–25 (MKRNFPKLIALSLIFSLSITPIANA) are cleaved as a signal peptide. The propeptide occupies 26–214 (ESNSNIKAKD…TSQFKSNNYT (189 aa)). Residues cysteine 238, histidine 334, and asparagine 355 contribute to the active site.

This sequence belongs to the peptidase C47 family. In terms of assembly, in the cytoplasm, prematurely activated/folded ScpA forms a stable non-covalent complex with ScpB. Cleavage leads to the activation of ScpA probably by an auto-catalytic manner.

The protein resides in the secreted. The catalysed reaction is Broad endopeptidase action on proteins including elastin, but rather limited hydrolysis of small-molecule substrates. Assays are conveniently made with hemoglobin, casein or Z-Phe-Arg-NHMec as substrate.. Prematurely activated/folded staphopain A is inhibited by staphostatin A (ScpB), which is probably required to protect staphylococcal cytoplasmic proteins from degradation by ScpA. Cysteine protease that plays an important role in the inhibition of host innate immune response. Cleaves host elastins found in connective tissues, pulmonary surfactant protein A in the lungs, and the chemokine receptor CXCR2 on leukocytes. Proteolytic cleavage of surfactant protein A impairs bacterial phagocytosis by neutrophils while CXCR2 degradation blocks neutrophil activation and chemotaxis. Additionally, promotes vascular leakage by activating the plasma kallikerin/kinin system, resulting in hypotension. The sequence is that of Staphopain A (sspP) from Staphylococcus aureus (strain MRSA252).